Reading from the N-terminus, the 552-residue chain is Protein TRM32 (552 aa).

The disordered stretch occupies residues threonine 295 to leucine 379. Residues valine 331–leucine 351 are compositionally biased toward basic and acidic residues. Residues aspartate 352–lysine 371 are compositionally biased toward polar residues.

This chain is Protein TRM32 (TRM32), found in Arabidopsis thaliana (Mouse-ear cress).